A 467-amino-acid polypeptide reads, in one-letter code: Congo red hypersensitive protein 2 (467 aa).

The N-terminal stretch at 1–23 is a signal peptide; the sequence is MAIVNSWLICLVSIFSFVVRVEA. N28 is a glycosylation site (N-linked (GlcNAc...) asparagine). A disulfide bridge connects residues C56 and C67. The region spanning 63-280 is the GH16 domain; sequence SHDSCMPVPI…WSGGEINWDA (218 aa). Residue N96 is glycosylated (N-linked (GlcNAc...) asparagine). Catalysis depends on E166, which acts as the Nucleophile. Catalysis depends on E170, which acts as the Proton donor. E170 is a binding site for chitin. Residues N190, N196, N233, and N237 are each glycosylated (N-linked (GlcNAc...) asparagine). Position 257 (W257) interacts with chitin. N261 carries N-linked (GlcNAc...) asparagine glycosylation. T268 contributes to the chitin binding site. Residues N297 and N310 are each glycosylated (N-linked (GlcNAc...) asparagine). A disordered region spans residues 337–444; it reads MDSDEGSGLD…SSSTSSMSGN (108 aa). The segment covering 351-444 has biased composition (low complexity); sequence ATTSSTQKSS…SSSTSSMSGN (94 aa). N445 carries GPI-anchor amidated asparagine lipidation. Positions 446–467 are cleaved as a propeptide — removed in mature form; sequence AGANVAANWRLTVLCVILGYVL.

Belongs to the glycosyl hydrolase 16 family. CRH1 subfamily. Post-translationally, the GPI-anchor is attached to the protein in the endoplasmic reticulum and serves to target the protein to the cell surface. There, the glucosamine-inositol phospholipid moiety is cleaved off and the GPI-modified mannoprotein is covalently attached via its lipidless GPI glycan remnant to the 1,6-beta-glucan of the outer cell wall layer.

It is found in the secreted. It localises to the cell wall. The protein resides in the membrane. It catalyses the reaction Random endo-hydrolysis of N-acetyl-beta-D-glucosaminide (1-&gt;4)-beta-linkages in chitin and chitodextrins.. Its function is as follows. Dual chitinase/transglycosylase that plays a role in cell wall architecture. Chitinase and transglycosylase activities are coupled. Required for the polysaccharide cross-linking at the septa and the cell wall. More specifically, transfers chitin to both beta(1-3)- and beta(1-6)glucan in the cell wall. The minimal number of intact hexopyranose units required in the molecule of the acceptor oligosaccharide is two and the effectivity of the acceptor increased with the increasing length of its oligosaccharide chain. This Saccharomyces cerevisiae (strain ATCC 204508 / S288c) (Baker's yeast) protein is Congo red hypersensitive protein 2.